Reading from the N-terminus, the 38-residue chain is Photosystem II reaction center protein L (38 aa).

Residues 17–37 (SLFWGLLLIFVLAVLFSSYFF) form a helical membrane-spanning segment.

The protein belongs to the PsbL family. As to quaternary structure, PSII is composed of 1 copy each of membrane proteins PsbA, PsbB, PsbC, PsbD, PsbE, PsbF, PsbH, PsbI, PsbJ, PsbK, PsbL, PsbM, PsbT, PsbX, PsbY, PsbZ, Psb30/Ycf12, at least 3 peripheral proteins of the oxygen-evolving complex and a large number of cofactors. It forms dimeric complexes.

The protein localises to the plastid. The protein resides in the chloroplast thylakoid membrane. One of the components of the core complex of photosystem II (PSII). PSII is a light-driven water:plastoquinone oxidoreductase that uses light energy to abstract electrons from H(2)O, generating O(2) and a proton gradient subsequently used for ATP formation. It consists of a core antenna complex that captures photons, and an electron transfer chain that converts photonic excitation into a charge separation. This subunit is found at the monomer-monomer interface and is required for correct PSII assembly and/or dimerization. The polypeptide is Photosystem II reaction center protein L (Gracilaria tenuistipitata var. liui (Red alga)).